The following is a 347-amino-acid chain: Olfactory receptor 1L6 (347 aa).

The Extracellular segment spans residues 1 to 62 (MSYFYRLKLM…GLSSNPQLQK (62 aa)). N-linked (GlcNAc...) asparagine glycosylation occurs at Asn41. A helical transmembrane segment spans residues 63-86 (PLFAIFLIMYLLAAVGNVLIIPAI). Residues 87–94 (YSDPRLHT) are Cytoplasmic-facing. The helical transmembrane segment at 95–116 (PMYFFLSNLSFMDICFTTVIVP) threads the bilayer. The Extracellular segment spans residues 117–137 (KMLVNFLSETKVISYVGCLAQ). A disulfide bond links Cys134 and Cys226. A helical transmembrane segment spans residues 138–157 (MYFFMAFGNTDSYLLASMAI). Residues 158 to 176 (DRLVAICNPLHYDVVMKPR) are Cytoplasmic-facing. Residues 177–195 (HCLLMLLGSCSISHLHSLF) traverse the membrane as a helical segment. Over 196-233 (RVLLMSRLSFCASHIIKHFFCDTQPVLKLSCSDTSSSQ) the chain is Extracellular. Residues 234–256 (MVVMTETLAVIVTPFLCIIFSYL) traverse the membrane as a helical segment. Residues 257–273 (RIMVTVLRIPSAAGKWK) are Cytoplasmic-facing. The helical transmembrane segment at 274 to 296 (AFSTCGSHLTAVALFYGSIIYVY) threads the bilayer. Topologically, residues 297-309 (FRPLSMYSVVRDR) are extracellular. The helical transmembrane segment at 310-329 (VATVMYTVVTPMLNPFIYSL) threads the bilayer. Residues 330–347 (RNKDMKRGLKKLQDRIYR) lie on the Cytoplasmic side of the membrane.

The protein belongs to the G-protein coupled receptor 1 family.

It is found in the cell membrane. In terms of biological role, odorant receptor. The chain is Olfactory receptor 1L6 (OR1L6) from Homo sapiens (Human).